The chain runs to 542 residues: Putative DEAD-box ATP-dependent RNA helicase 43 (542 aa).

The Q motif motif lies at 97–125 (KNFMDMKFPSPLLRMLKDKGIMHPTPIQV). The Helicase ATP-binding domain maps to 128 to 312 (LPVVLSGRDM…TSALVKPVTV (185 aa)). 141–148 (AFTGSGKT) serves as a coordination point for ATP. Residues 260–263 (DEAD) carry the DEAD box motif. The 161-residue stretch at 323–483 (DVIQEVEYVK…RIPPVLAELN (161 aa)) folds into the Helicase C-terminal domain. The CCHC-type zinc-finger motif lies at 499 to 516 (KGCAYCGGLGHRILQCPK).

Belongs to the DEAD box helicase family. DDX41 subfamily.

It carries out the reaction ATP + H2O = ADP + phosphate + H(+). In Arabidopsis thaliana (Mouse-ear cress), this protein is Putative DEAD-box ATP-dependent RNA helicase 43 (RH43).